Here is a 290-residue protein sequence, read N- to C-terminus: GTPase Era (290 aa).

An Era-type G domain is found at 2–168; the sequence is KVCIISILGR…IEILKEYAYN (167 aa). Positions 10–17 are G1; sequence GRPNVGKS. Residue 10–17 coordinates GTP; the sequence is GRPNVGKS. A G2 region spans residues 36–40; the sequence is QTTRD. Residues 57 to 60 form a G3 region; sequence DTPG. GTP is bound by residues 57 to 61 and 118 to 121; these read DTPGI and SKID. Positions 118-121 are G4; sequence SKID. The G5 stretch occupies residues 147-149; the sequence is VSN. The KH type-2 domain occupies 199-275; the sequence is LTDELPHSIA…TLNLKVKVSN (77 aa).

It belongs to the TRAFAC class TrmE-Era-EngA-EngB-Septin-like GTPase superfamily. Era GTPase family. As to quaternary structure, monomer.

The protein localises to the cytoplasm. Its subcellular location is the cell membrane. Its function is as follows. An essential GTPase that binds both GDP and GTP, with rapid nucleotide exchange. Plays a role in 16S rRNA processing and 30S ribosomal subunit biogenesis and possibly also in cell cycle regulation and energy metabolism. This is GTPase Era from Mycoplasmopsis agalactiae (strain NCTC 10123 / CIP 59.7 / PG2) (Mycoplasma agalactiae).